Here is an 837-residue protein sequence, read N- to C-terminus: Outer membrane usher protein PsaC (837 aa).

Residues 1-23 (MKKLIVQFTTITLLMSTSFLVGA) form the signal peptide.

This sequence belongs to the fimbrial export usher family.

Its subcellular location is the cell outer membrane. Involved in the export and assembly of PsaA (pH 6) fimbrial subunits across the outer membrane. The chain is Outer membrane usher protein PsaC (psaC) from Yersinia pestis.